The sequence spans 171 residues: NADH-quinone oxidoreductase subunit B 1 (171 aa).

4 residues coordinate [4Fe-4S] cluster: Cys-44, Cys-45, Cys-110, and Cys-139.

The protein belongs to the complex I 20 kDa subunit family. In terms of assembly, NDH-1 is composed of 14 different subunits. Subunits NuoB, C, D, E, F, and G constitute the peripheral sector of the complex. The cofactor is [4Fe-4S] cluster.

It localises to the cell inner membrane. The catalysed reaction is a quinone + NADH + 5 H(+)(in) = a quinol + NAD(+) + 4 H(+)(out). In terms of biological role, NDH-1 shuttles electrons from NADH, via FMN and iron-sulfur (Fe-S) centers, to quinones in the respiratory chain. The immediate electron acceptor for the enzyme in this species is believed to be ubiquinone. Couples the redox reaction to proton translocation (for every two electrons transferred, four hydrogen ions are translocated across the cytoplasmic membrane), and thus conserves the redox energy in a proton gradient. The polypeptide is NADH-quinone oxidoreductase subunit B 1 (Opitutus terrae (strain DSM 11246 / JCM 15787 / PB90-1)).